The sequence spans 287 residues: Ribosomal RNA small subunit methyltransferase A (287 aa).

The S-adenosyl-L-methionine site is built by asparagine 28, leucine 30, glycine 55, glutamate 76, aspartate 101, and asparagine 125.

The protein belongs to the class I-like SAM-binding methyltransferase superfamily. rRNA adenine N(6)-methyltransferase family. RsmA subfamily.

The protein localises to the cytoplasm. The enzyme catalyses adenosine(1518)/adenosine(1519) in 16S rRNA + 4 S-adenosyl-L-methionine = N(6)-dimethyladenosine(1518)/N(6)-dimethyladenosine(1519) in 16S rRNA + 4 S-adenosyl-L-homocysteine + 4 H(+). In terms of biological role, specifically dimethylates two adjacent adenosines (A1518 and A1519) in the loop of a conserved hairpin near the 3'-end of 16S rRNA in the 30S particle. May play a critical role in biogenesis of 30S subunits. This is Ribosomal RNA small subunit methyltransferase A from Alkaliphilus metalliredigens (strain QYMF).